The chain runs to 473 residues: FAD-dependent urate hydroxylase (473 aa).

Belongs to the HpyO family. In terms of assembly, homodimer. The cofactor is FAD.

The enzyme catalyses urate + NADH + O2 + H(+) = 5-hydroxyisourate + NAD(+) + H2O. The catalysed reaction is urate + NADPH + O2 + H(+) = 5-hydroxyisourate + NADP(+) + H2O. The protein operates within purine metabolism; urate degradation. In terms of biological role, catalyzes the hydroxylation of urate to 5-hydroxyisourate (HIU). Is likely to be involved in the urate degradation pathway to allantoin. Is slightly more efficient (about 2.6 times) with NADPH than NADH as the electron donor. The protein is FAD-dependent urate hydroxylase of Xanthomonas campestris pv. campestris (strain ATCC 33913 / DSM 3586 / NCPPB 528 / LMG 568 / P 25).